A 227-amino-acid polypeptide reads, in one-letter code: Ribonuclease 3 (227 aa).

One can recognise an RNase III domain in the interval 6-128 (ASDYQQRIGY…VIAAIYLDAD (123 aa)). Glu41 provides a ligand contact to Mg(2+). Asp45 is an active-site residue. Mg(2+) is bound by residues Asp114 and Glu117. The active site involves Glu117. The DRBM domain maps to 155 to 225 (DPKTRLQEWL…ASHAINQLDS (71 aa)). Basic and acidic residues predominate over residues 203 to 212 (GEGSSRRLAE). The segment at 203–227 (GEGSSRRLAEQDAASHAINQLDSNK) is disordered.

It belongs to the ribonuclease III family. As to quaternary structure, homodimer. The cofactor is Mg(2+).

The protein localises to the cytoplasm. It catalyses the reaction Endonucleolytic cleavage to 5'-phosphomonoester.. Digests double-stranded RNA. Involved in the processing of primary rRNA transcript to yield the immediate precursors to the large and small rRNAs (23S and 16S). Processes some mRNAs, and tRNAs when they are encoded in the rRNA operon. Processes pre-crRNA and tracrRNA of type II CRISPR loci if present in the organism. The chain is Ribonuclease 3 from Xylella fastidiosa (strain M12).